Here is a 577-residue protein sequence, read N- to C-terminus: 2-hydroxyacyl-CoA lyase (577 aa).

Glutamate 59 provides a ligand contact to thiamine diphosphate. Residues 412 to 493 are thiamine pyrophosphate binding; that stretch reads TMDVGRAVLV…VIVFNNNGVY (82 aa). Mg(2+) is bound by residues aspartate 462 and asparagine 489.

This sequence belongs to the TPP enzyme family. As to quaternary structure, homotetramer. It depends on Mg(2+) as a cofactor. The cofactor is thiamine diphosphate.

It catalyses the reaction an (R)-2-hydroxy-long-chain-fatty acyl-CoA = a long-chain fatty aldehyde + formyl-CoA. The catalysed reaction is a 2-hydroxy-3-methyl fatty acyl-CoA = a 2-methyl-branched fatty aldehyde + formyl-CoA. Catalyzes a carbon-carbon cleavage reaction; cleaves a 2-hydroxy-3-methylacyl-CoA into formyl-CoA and a 2-methyl-branched fatty aldehyde. This is 2-hydroxyacyl-CoA lyase from Oryza sativa subsp. japonica (Rice).